Consider the following 219-residue polypeptide: Proteasome subunit beta type-9 (219 aa).

The propeptide at 1-20 (MLRAGAPTAGSFRTKEVHTG) is removed in mature form. Catalysis depends on Thr21, which acts as the Nucleophile. 2 positions are modified to N6-acetyllysine: Lys53 and Lys109.

The protein belongs to the peptidase T1B family. In terms of assembly, the 26S proteasome consists of a 20S proteasome core and two 19S regulatory subunits. The 20S proteasome core is composed of 28 subunits that are arranged in four stacked rings, resulting in a barrel-shaped structure. The two end rings are each formed by seven alpha subunits, and the two central rings are each formed by seven beta subunits. The catalytic chamber with the active sites is on the inside of the barrel. Component of the immunoproteasome, where it displaces the equivalent housekeeping subunit PSMB6. Component of the spermatoproteasome, a form of the proteasome specifically found in testis. Post-translationally, autocleaved. The resulting N-terminal Thr residue of the mature subunit is responsible for the nucleophile proteolytic activity.

Its subcellular location is the cytoplasm. The protein resides in the nucleus. The catalysed reaction is Cleavage of peptide bonds with very broad specificity.. In terms of biological role, the proteasome is a multicatalytic proteinase complex which is characterized by its ability to cleave peptides with Arg, Phe, Tyr, Leu, and Glu adjacent to the leaving group at neutral or slightly basic pH. The proteasome has an ATP-dependent proteolytic activity. This subunit is involved in antigen processing to generate class I binding peptides. The chain is Proteasome subunit beta type-9 (Psmb9) from Mus platythrix (Flat-haired mouse).